The primary structure comprises 424 residues: CinA-like protein (424 aa).

This sequence belongs to the CinA family.

In Shewanella putrefaciens (strain CN-32 / ATCC BAA-453), this protein is CinA-like protein.